A 286-amino-acid chain; its full sequence is Homeobox-leucine zipper protein ATHB-20 (286 aa).

Residues 84–143 constitute a DNA-binding region (homeobox); that stretch reads LGEKKKRLQLEQVKALEKSFELGNKLEPERKIQLAKALGMQPRQIAIWFQNRRARWKTRQ. Residues 144 to 179 form a leucine-zipper region; sequence LERDYDSLKKQFESLKSDNASLLAYNKKLLAEVMAL.

The protein belongs to the HD-ZIP homeobox family. Class I subfamily. In terms of tissue distribution, widely expressed.

The protein resides in the nucleus. Its function is as follows. Probable transcription factor. The protein is Homeobox-leucine zipper protein ATHB-20 (ATHB-20) of Arabidopsis thaliana (Mouse-ear cress).